An 881-amino-acid polypeptide reads, in one-letter code: Phosphoenolpyruvate carboxylase (881 aa).

Catalysis depends on residues histidine 139 and lysine 544.

It belongs to the PEPCase type 1 family. The cofactor is Mg(2+).

The catalysed reaction is oxaloacetate + phosphate = phosphoenolpyruvate + hydrogencarbonate. In terms of biological role, forms oxaloacetate, a four-carbon dicarboxylic acid source for the tricarboxylic acid cycle. This is Phosphoenolpyruvate carboxylase from Marinobacter nauticus (strain ATCC 700491 / DSM 11845 / VT8) (Marinobacter aquaeolei).